The following is a 247-amino-acid chain: Phycobilisome rod-core linker polypeptide CpcG2 (247 aa).

The PBS-linker domain occupies 11-189; sequence SSQNQRVPGY…YWRDKLESER (179 aa). The interval 223 to 247 is disordered; the sequence is PDTTRNTTPTGIPISVNPSANFPVR.

This sequence belongs to the phycobilisome linker protein family. In terms of assembly, part of the phycobilisome, a hemidiscoidal structure that is composed of two distinct substructures: a core complex and a number of rods radiating from the core.

The protein localises to the cellular thylakoid membrane. In terms of biological role, rod-core linker protein required for attachment of phycocyanin to allophycocyanin in cores of phycobilisomes. Functionally, linker polypeptides determine the state of aggregation and the location of the disk-shaped phycobiliprotein units within the phycobilisome and modulate their spectroscopic properties in order to mediate a directed and optimal energy transfer. This Nostoc sp. (strain PCC 7120 / SAG 25.82 / UTEX 2576) protein is Phycobilisome rod-core linker polypeptide CpcG2.